Consider the following 588-residue polypeptide: Peptidoglycan D,D-transpeptidase FtsI (588 aa).

Residues 19–39 (FISWRFALLCGCILLALAFLL) traverse the membrane as a helical segment. Ser307 (acyl-ester intermediate) is an active-site residue. A propeptide spanning residues 578–588 (INQGEGTGGRS) is cleaved from the precursor.

The protein belongs to the transpeptidase family. FtsI subfamily.

It is found in the cell inner membrane. The enzyme catalyses Preferential cleavage: (Ac)2-L-Lys-D-Ala-|-D-Ala. Also transpeptidation of peptidyl-alanyl moieties that are N-acyl substituents of D-alanine.. Its pathway is cell wall biogenesis; peptidoglycan biosynthesis. Functionally, catalyzes cross-linking of the peptidoglycan cell wall at the division septum. The chain is Peptidoglycan D,D-transpeptidase FtsI from Escherichia coli O157:H7.